The sequence spans 377 residues: Guanine nucleotide-binding protein subunit beta (377 aa).

7 WD repeats span residues 63 to 93, 105 to 135, 154 to 185, 202 to 233, 246 to 276, 293 to 323, and 339 to 369; these read GHTG…IVWN, LPCA…SIFN, GHKG…VLWD, GHTA…RLWD, CHEG…RLFD, GDIP…YVWD, and SHEG…KIWA.

This sequence belongs to the WD repeat G protein beta family. In terms of assembly, g proteins are composed of 3 units, alpha, beta and gamma.

The protein resides in the cell membrane. It localises to the endoplasmic reticulum membrane. In terms of biological role, guanine nucleotide-binding proteins (G proteins) are involved as a modulator or transducer in various transmembrane signaling systems. The beta and gamma chains are required for the GTPase activity, for replacement of GDP by GTP, and for G protein-effector interaction. This Nicotiana plumbaginifolia (Leadwort-leaved tobacco) protein is Guanine nucleotide-binding protein subunit beta.